The chain runs to 151 residues: Myosin light polypeptide 6 (151 aa).

Residue C2 is modified to N-acetylcysteine. 3 EF-hand domains span residues 7 to 42 (EQTAEFKEAFQLFDRTGDGKILYSQCGDVMRALGQN), 84 to 119 (GCFEDYVEGLRVFDKEGNGTVMGAEIRHVLVTLGEK), and 119 to 151 (KMTEEEVEQLVAGHEDSNGCINYEELVRMVLSG).

As to quaternary structure, myosin is a hexamer of 2 heavy chains and 4 light chains.

Its function is as follows. Regulatory light chain of myosin. Does not bind calcium. The sequence is that of Myosin light polypeptide 6 (MYL6) from Gallus gallus (Chicken).